We begin with the raw amino-acid sequence, 1371 residues long: uncharacterized protein (1371 aa).

The interval tryptophan 1020–proline 1048 is disordered. A compositionally biased stretch (basic and acidic residues) spans proline 1029 to leucine 1046. The Autotransporter domain maps to glycine 1083–phenylalanine 1371.

The protein resides in the cell outer membrane. This is an uncharacterized protein from Escherichia coli (strain K12).